A 962-amino-acid chain; its full sequence is Vacuolar membrane protease (962 aa).

The Cytoplasmic portion of the chain corresponds to 1–15 (MVSSRRGFNPIAFTP). The chain crosses the membrane as a helical span at residues 16-36 (WPVTILSSLVYLALIIPIIVV). At 37 to 390 (HHLVPPAPKE…FQLNTLFGHS (354 aa)) the chain is on the vacuolar side. 2 N-linked (GlcNAc...) asparagine glycosylation sites follow: asparagine 110 and asparagine 113. Zn(2+) contacts are provided by histidine 169 and aspartate 181. Catalysis depends on glutamate 215, which acts as the Proton acceptor. Positions 216, 241, and 314 each coordinate Zn(2+). The helical transmembrane segment at 391-411 (VALLVVAPLLLIITSVALFAV) threads the bilayer. Residues 412 to 440 (DKMYMFSMYTYISESGGQVSLYGLRGMFR) lie on the Cytoplasmic side of the membrane. A helical membrane pass occupies residues 441-461 (FPLILGISTALTIALAFLIMK). At 462-472 (VNPFIIYSSPY) the chain is on the vacuolar side. The helical transmembrane segment at 473–493 (AVWSMMLSTCMFFAWFISCVA) threads the bilayer. The Cytoplasmic segment spans residues 494 to 503 (DFARPSALHR). The helical transmembrane segment at 504-524 (AYSFSWMFGIMWVFLVIATVY) threads the bilayer. Topologically, residues 525 to 534 (QKQHGIASSY) are vacuolar. A helical transmembrane segment spans residues 535–555 (FIVFYFAGVAVATWISYLELF). Residues 556-667 (GLPKTQDYAR…WSIYLMSSAW (112 aa)) are Cytoplasmic-facing. Residues 568 to 617 (GRLSDRTPSSDSHFLAPSADELPSSSSAAGRDFNPEDVEDEEPTESTSLL) form a disordered region. The segment covering 602-611 (PEDVEDEEPT) has biased composition (acidic residues). A helical transmembrane segment spans residues 668–688 (ILQFLLVAPIVIILLGQLGLF). Residues 689 to 704 (LTSATYQIGADGGSQL) are Vacuolar-facing. Residues 705–725 (VIYIGIAVLSVLILLPLFPFI) form a helical membrane-spanning segment. Over 726–731 (HRFTYH) the chain is Cytoplasmic. Residues 732 to 752 (IPTFLLFILIGTLVYNLTAFP) form a helical membrane-spanning segment. The Vacuolar portion of the chain corresponds to 753-962 (FSHSNRLKLA…LVEGSYSFKL (210 aa)). N-linked (GlcNAc...) asparagine glycosylation occurs at asparagine 834.

The protein belongs to the peptidase M28 family. Requires Zn(2+) as cofactor.

It localises to the vacuole membrane. Its function is as follows. May be involved in vacuolar sorting and osmoregulation. The chain is Vacuolar membrane protease from Arthroderma benhamiae (strain ATCC MYA-4681 / CBS 112371) (Trichophyton mentagrophytes).